The primary structure comprises 337 residues: MLISQRPALTEEFIDDSRSRFVIEPLEPGFGYTLGNSLRRTLLSSIPGAAVTSLRIEGVLHEFTTIPGVKEDVSDIILNIKSLVLSSDSDEPVSMFIRKEGPGEVTGADVEVPAGVEVHNQDLHIATLNEQGKLEIEMTVERGRGYVPAATASSEIGRIPVDQIYSPVLKVSYKVEATRVEQRTDFDKLILDVETKNSITARDAMASAGKTLVELFGLAQELNHEAEGIEIGPSPQESEHIAAYSMPIEDLNFSVRSYNCLKREEIHTVGELAARTESDLLDIRNFGQKSINEVKVKLAGLGLGLKDAPEGFDITDIEGYDAETGEFIDTEGEDIAE.

An alpha N-terminal domain (alpha-NTD) region spans residues 1-223 (MLISQRPALT…ELFGLAQELN (223 aa)). Residues 238–337 (SEHIAAYSMP…IDTEGEDIAE (100 aa)) form an alpha C-terminal domain (alpha-CTD) region.

It belongs to the RNA polymerase alpha chain family. Homodimer. The RNAP catalytic core consists of 2 alpha, 1 beta, 1 beta' and 1 omega subunit. When a sigma factor is associated with the core the holoenzyme is formed, which can initiate transcription.

It catalyses the reaction RNA(n) + a ribonucleoside 5'-triphosphate = RNA(n+1) + diphosphate. In terms of biological role, DNA-dependent RNA polymerase catalyzes the transcription of DNA into RNA using the four ribonucleoside triphosphates as substrates. This chain is DNA-directed RNA polymerase subunit alpha, found in Corynebacterium jeikeium (strain K411).